The primary structure comprises 460 residues: Proline--tRNA ligase (460 aa).

This sequence belongs to the class-II aminoacyl-tRNA synthetase family. ProS type 3 subfamily. In terms of assembly, homodimer.

It localises to the cytoplasm. The enzyme catalyses tRNA(Pro) + L-proline + ATP = L-prolyl-tRNA(Pro) + AMP + diphosphate. Its function is as follows. Catalyzes the attachment of proline to tRNA(Pro) in a two-step reaction: proline is first activated by ATP to form Pro-AMP and then transferred to the acceptor end of tRNA(Pro). The sequence is that of Proline--tRNA ligase from Methanococcus maripaludis (strain C5 / ATCC BAA-1333).